Reading from the N-terminus, the 581-residue chain is Ketol-acid reductoisomerase, chloroplastic (581 aa).

The transit peptide at 1–50 (MAAVTSSCSTAISASSKTLAKPVAASFAPTNLSFSKLSPQSIRARRSITV) directs the protein to the chloroplast. The 199-residue stretch at 92–290 (VRGGRDLFHL…ALGSPFTFAT (199 aa)) folds into the KARI N-terminal Rossmann domain. Residues 113-120 (GVIGWGSQ), 146-151 (RKGSSS), and 185-189 (SDSAQ) each bind NADP(+). His210 is an active-site residue. KARI C-terminal knotted domains follow at residues 291 to 439 (TLEQ…RPAG) and 440 to 576 (DLGP…RPEL). Mg(2+)-binding residues include Asp299, Glu303, Glu476, and Glu480. Ser502 is a substrate binding site.

This sequence belongs to the ketol-acid reductoisomerase family. In terms of assembly, homodimer. Mg(2+) is required as a cofactor.

The protein localises to the plastid. The protein resides in the chloroplast. The enzyme catalyses (2R)-2,3-dihydroxy-3-methylbutanoate + NADP(+) = (2S)-2-acetolactate + NADPH + H(+). The catalysed reaction is (2R,3R)-2,3-dihydroxy-3-methylpentanoate + NADP(+) = (S)-2-ethyl-2-hydroxy-3-oxobutanoate + NADPH + H(+). The protein operates within amino-acid biosynthesis; L-isoleucine biosynthesis; L-isoleucine from 2-oxobutanoate: step 2/4. Its pathway is amino-acid biosynthesis; L-valine biosynthesis; L-valine from pyruvate: step 2/4. This is Ketol-acid reductoisomerase, chloroplastic (PGAAIR) from Pisum sativum (Garden pea).